Consider the following 98-residue polypeptide: Large ribosomal subunit protein eL21 (98 aa).

Positions 1–17 are enriched in basic residues; it reads MQRSRGFRSKSRRKMTK. The tract at residues 1–28 is disordered; sequence MQRSRGFRSKSRRKMTKVVREGRSNPIT.

This sequence belongs to the eukaryotic ribosomal protein eL21 family.

This Methanobrevibacter smithii (strain ATCC 35061 / DSM 861 / OCM 144 / PS) protein is Large ribosomal subunit protein eL21.